The primary structure comprises 316 residues: MLEEQYLNLERYVLENGHLKGDRTQTGTLSTFGYQMRFDLSEGFPLLTTKRVPFGLIKSELLWFLKGDTNIRYLLQHNNHIWDEWAFKKWVESDEYQGPDMTDFGHRSLTDPEFNELYKIEKQRFTEQILEDDTFSAKYGDLGNVYGSQWRAWKTSTGETIDQISNVIDMIKNNPNSRRMIVSAWNPEDVPTSALPPCHSLFQFYVADGKLSCQLYQRSGDIFLGIPFNIASYALLTELIAKATGLEVGEFIHTIGDAHIYSNHLDQVKEQLERTPRPAPKLKFKQVHDSIFDYEPGDIVVEGYDPHPTIKAPVAV.

Residues Arg23 and 178–179 (RR) each bind dUMP. Residue Cys198 is the Nucleophile of the active site. DUMP-binding positions include 218-221 (RSGD), Asn229, and 259-261 (HIY). A (6R)-5,10-methylene-5,6,7,8-tetrahydrofolate-binding site is contributed by Asp221. Ala315 contributes to the (6R)-5,10-methylene-5,6,7,8-tetrahydrofolate binding site.

Belongs to the thymidylate synthase family. Bacterial-type ThyA subfamily. Homodimer.

The protein localises to the cytoplasm. The enzyme catalyses dUMP + (6R)-5,10-methylene-5,6,7,8-tetrahydrofolate = 7,8-dihydrofolate + dTMP. It functions in the pathway pyrimidine metabolism; dTTP biosynthesis. In terms of biological role, catalyzes the reductive methylation of 2'-deoxyuridine-5'-monophosphate (dUMP) to 2'-deoxythymidine-5'-monophosphate (dTMP) while utilizing 5,10-methylenetetrahydrofolate (mTHF) as the methyl donor and reductant in the reaction, yielding dihydrofolate (DHF) as a by-product. This enzymatic reaction provides an intracellular de novo source of dTMP, an essential precursor for DNA biosynthesis. This chain is Thymidylate synthase, found in Pediococcus pentosaceus (strain ATCC 25745 / CCUG 21536 / LMG 10740 / 183-1w).